A 181-amino-acid chain; its full sequence is Coatomer subunit zeta-3 (181 aa).

It belongs to the adaptor complexes small subunit family. In terms of assembly, oligomeric complex that consists of at least the alpha, beta, beta', gamma, delta, epsilon and zeta subunits.

The protein localises to the cytoplasm. It is found in the golgi apparatus membrane. The protein resides in the cytoplasmic vesicle. It localises to the COPI-coated vesicle membrane. Its function is as follows. The coatomer is a cytosolic protein complex that binds to dilysine motifs and reversibly associates with Golgi non-clathrin-coated vesicles, which further mediate biosynthetic protein transport from the ER, via the Golgi up to the trans Golgi network. Coatomer complex is required for budding from Golgi membranes, and is essential for the retrograde Golgi-to-ER transport of dilysine-tagged proteins. The zeta subunit may be involved in regulating the coat assembly and, hence, the rate of biosynthetic protein transport due to its association-dissociation properties with the coatomer complex. This chain is Coatomer subunit zeta-3, found in Arabidopsis thaliana (Mouse-ear cress).